The primary structure comprises 127 residues: MAANISKLEAIIDNTPNSSPDPEVSHKLWVSSLNKFQYTLPLLISNFAGLGIAFIYCLIAFIREMSHPSSRKDTMEHGLPIILCSTLMLVGNILYYFLSKHPLKVTVPEDLVQIPMQQMSSPAQEAP.

2 helical membrane-spanning segments follow: residues 42-62 and 78-98; these read LLISNFAGLGIAFIYCLIAFI and GLPIILCSTLMLVGNILYYFL.

Its subcellular location is the membrane. This is an uncharacterized protein from Schizosaccharomyces pombe (strain 972 / ATCC 24843) (Fission yeast).